The following is a 742-amino-acid chain: Conidiogenone synthase (742 aa).

Residues 1 to 332 (MGETIADVYA…SLCVPRYFKV (332 aa)) are terpene cyclase. Asp-97 is a binding site for Mg(2+). Substrate is bound by residues Asp-97, 190–193 (RIVD), Asn-234, 238–242 (SWDKE), and 328–329 (RY). The DDXXD 1 motif lies at 97–101 (DDETD). The short motif at 234-242 (NDLFSWDKE) is the NSE/DTE element. Positions 333 to 742 (ERNPYKDHLE…LRAMEEASQK (410 aa)) are prenyltransferase. Isopentenyl diphosphate-binding residues include Lys-414, Arg-417, and His-446. Positions 453 and 457 each coordinate Mg(2+). The DDXXD 2 signature appears at 453–457 (DDIQD). Arg-462 is a dimethylallyl diphosphate binding site. Arg-463 provides a ligand contact to isopentenyl diphosphate. Dimethylallyl diphosphate contacts are provided by Lys-539, Thr-540, Gln-575, Asn-582, Lys-592, and Lys-602. Positions 701-724 (EAHKSDSAWKVNQRRAWKGSQKNG) are disordered.

The protein in the N-terminal section; belongs to the terpene synthase family. In the C-terminal section; belongs to the FPP/GGPP synthase family. As to quaternary structure, hexamer. Requires Mg(2+) as cofactor.

The enzyme catalyses isopentenyl diphosphate + (2E,6E)-farnesyl diphosphate = (2E,6E,10E)-geranylgeranyl diphosphate + diphosphate. Its pathway is secondary metabolite biosynthesis; terpenoid biosynthesis. Functionally, bifunctional terpene synthase; part of the gene cluster that mediates the biosynthesis of conidiogenone, a diterpene known to induce the conidiation. The bifunctional terpene synthase PrDS converts isopentenyl diphosphate (IPP) and dimethylallyl diphosphate (DMAPP) into deoxyconidiogenol. The C-terminal prenyltransferase (PT) domain of PrDS catalyzes formation of GGPP, whereas the N-terminal terpene cyclase (TC) domain catalyzes the cyclization of GGPP into deoxyconidiogenol. The cytochrome P450 monooxygenase PrP450 then catalyzes two rounds of oxidation to furnish conidiogenone. The sequence is that of Conidiogenone synthase from Penicillium roqueforti (strain FM164).